We begin with the raw amino-acid sequence, 946 residues long: Bifunctional glutamine synthetase adenylyltransferase/adenylyl-removing enzyme (946 aa).

The adenylyl removase stretch occupies residues 1 to 440 (MKPLSSPLQQ…VFNELIGDDE (440 aa)). An adenylyl transferase region spans residues 449–946 (SEQWRELWQD…ASWQKWLVEE (498 aa)).

It belongs to the GlnE family. The cofactor is Mg(2+).

The catalysed reaction is [glutamine synthetase]-O(4)-(5'-adenylyl)-L-tyrosine + phosphate = [glutamine synthetase]-L-tyrosine + ADP. It catalyses the reaction [glutamine synthetase]-L-tyrosine + ATP = [glutamine synthetase]-O(4)-(5'-adenylyl)-L-tyrosine + diphosphate. Involved in the regulation of glutamine synthetase GlnA, a key enzyme in the process to assimilate ammonia. When cellular nitrogen levels are high, the C-terminal adenylyl transferase (AT) inactivates GlnA by covalent transfer of an adenylyl group from ATP to specific tyrosine residue of GlnA, thus reducing its activity. Conversely, when nitrogen levels are low, the N-terminal adenylyl removase (AR) activates GlnA by removing the adenylyl group by phosphorolysis, increasing its activity. The regulatory region of GlnE binds the signal transduction protein PII (GlnB) which indicates the nitrogen status of the cell. In Escherichia coli O81 (strain ED1a), this protein is Bifunctional glutamine synthetase adenylyltransferase/adenylyl-removing enzyme.